A 457-amino-acid chain; its full sequence is Putative transposase y4bF (457 aa).

Positions 128–313 constitute an Integrase catalytic domain; that stretch reads TFHQPRLRRE…RPLNLAPDRL (186 aa). Positions 406–440 are disordered; sequence QDERPAPKVRTNSEKNGYTPRGRKPGKRTDFMNDP.

This is Putative transposase y4bF from Sinorhizobium fredii (strain NBRC 101917 / NGR234).